Reading from the N-terminus, the 120-residue chain is Large ribosomal subunit protein uL18c (120 aa).

The protein belongs to the universal ribosomal protein uL18 family. As to quaternary structure, part of the 50S ribosomal subunit; contacts the 5S rRNA.

The protein localises to the plastid. Its subcellular location is the chloroplast. Binds 5S rRNA, forms part of the central protuberance of the 50S subunit. This Porphyra purpurea (Red seaweed) protein is Large ribosomal subunit protein uL18c (rpl18).